Consider the following 493-residue polypeptide: Vacuolar-processing enzyme (493 aa).

An N-terminal signal peptide occupies residues M1 to G34. A propeptide spanning residues K35–D53 is cleaved from the precursor. H176 is an active-site residue. C218 functions as the Nucleophile in the catalytic mechanism. A disulfide bond links C251 and C265. N-linked (GlcNAc...) asparagine glycosylation is present at N318. 2 disulfides stabilise this stretch: C429-C459 and C441-C476.

It belongs to the peptidase C13 family.

Functionally, asparagine-specific endopeptidase involved in the processing of vacuolar seed protein precursors into the mature forms. The chain is Vacuolar-processing enzyme from Phaseolus vulgaris (Kidney bean).